We begin with the raw amino-acid sequence, 257 residues long: Acetylglutamate kinase (257 aa).

Residues 43 to 44, R65, and N157 contribute to the substrate site; that span reads GG. Residues 180 to 185 and 208 to 210 contribute to the ATP site; these read DVSGIL and IIT.

Belongs to the acetylglutamate kinase family. ArgB subfamily. In terms of assembly, homodimer.

The protein resides in the cytoplasm. The enzyme catalyses N-acetyl-L-glutamate + ATP = N-acetyl-L-glutamyl 5-phosphate + ADP. Its pathway is amino-acid biosynthesis; L-arginine biosynthesis; N(2)-acetyl-L-ornithine from L-glutamate: step 2/4. In terms of biological role, catalyzes the ATP-dependent phosphorylation of N-acetyl-L-glutamate. The polypeptide is Acetylglutamate kinase (Salmonella paratyphi A (strain AKU_12601)).